Consider the following 114-residue polypeptide: T cell receptor beta variable 27 (114 aa).

Residues 1-21 (MGPQLLGYVVLCLLGAGPLEA) form the signal peptide. The Ig-like domain occupies 22–114 (QVTQNPRYLI…TSLYFCASSL (93 aa)). Cysteines 42 and 110 form a disulfide. N103 carries an N-linked (GlcNAc...) asparagine glycan.

Alpha-beta TR is a heterodimer composed of an alpha and beta chain; disulfide-linked. The alpha-beta TR is associated with the transmembrane signaling CD3 coreceptor proteins to form the TR-CD3 (TcR or TCR). The assembly of alpha-beta TR heterodimers with CD3 occurs in the endoplasmic reticulum where a single alpha-beta TR heterodimer associates with one CD3D-CD3E heterodimer, one CD3G-CD3E heterodimer and one CD247 homodimer forming a stable octameric structure. CD3D-CD3E and CD3G-CD3E heterodimers preferentially associate with TR alpha and TR beta chains, respectively. The association of the CD247 homodimer is the last step of TcR assembly in the endoplasmic reticulum and is required for transport to the cell surface.

The protein localises to the cell membrane. Its function is as follows. V region of the variable domain of T cell receptor (TR) beta chain that participates in the antigen recognition. Alpha-beta T cell receptors are antigen specific receptors which are essential to the immune response and are present on the cell surface of T lymphocytes. Recognize peptide-major histocompatibility (MH) (pMH) complexes that are displayed by antigen presenting cells (APC), a prerequisite for efficient T cell adaptive immunity against pathogens. Binding of alpha-beta TR to pMH complex initiates TR-CD3 clustering on the cell surface and intracellular activation of LCK that phosphorylates the ITAM motifs of CD3G, CD3D, CD3E and CD247 enabling the recruitment of ZAP70. In turn ZAP70 phosphorylates LAT, which recruits numerous signaling molecules to form the LAT signalosome. The LAT signalosome propagates signal branching to three major signaling pathways, the calcium, the mitogen-activated protein kinase (MAPK) kinase and the nuclear factor NF-kappa-B (NF-kB) pathways, leading to the mobilization of transcription factors that are critical for gene expression and essential for T cell growth and differentiation. The T cell repertoire is generated in the thymus, by V-(D)-J rearrangement. This repertoire is then shaped by intrathymic selection events to generate a peripheral T cell pool of self-MH restricted, non-autoaggressive T cells. Post-thymic interaction of alpha-beta TR with the pMH complexes shapes TR structural and functional avidity. This is T cell receptor beta variable 27 from Homo sapiens (Human).